The sequence spans 151 residues: Large ribosomal subunit protein uL15 (151 aa).

Positions 1–60 are disordered; the sequence is MAENNPLKIHNLRPAPGAKTAKTRVGRGEASKGKTAGRGTKGTKARYQVPERFEGGQMPL.

Belongs to the universal ribosomal protein uL15 family. In terms of assembly, part of the 50S ribosomal subunit.

In terms of biological role, binds to the 23S rRNA. This Streptomyces coelicolor (strain ATCC BAA-471 / A3(2) / M145) protein is Large ribosomal subunit protein uL15.